The following is a 393-amino-acid chain: Aspartate aminotransferase (393 aa).

The L-aspartate site is built by Gly-38, Trp-124, and Asn-174. Lys-237 is subject to N6-(pyridoxal phosphate)lysine.

Belongs to the class-I pyridoxal-phosphate-dependent aminotransferase family. In terms of assembly, homodimer. Pyridoxal 5'-phosphate is required as a cofactor.

It is found in the cytoplasm. The enzyme catalyses L-aspartate + 2-oxoglutarate = oxaloacetate + L-glutamate. This Geobacillus stearothermophilus (Bacillus stearothermophilus) protein is Aspartate aminotransferase (aspC).